A 354-amino-acid chain; its full sequence is UDP-3-O-acylglucosamine N-acyltransferase (354 aa).

The active-site Proton acceptor is His-258.

It belongs to the transferase hexapeptide repeat family. LpxD subfamily. In terms of assembly, homotrimer.

The catalysed reaction is a UDP-3-O-[(3R)-3-hydroxyacyl]-alpha-D-glucosamine + a (3R)-hydroxyacyl-[ACP] = a UDP-2-N,3-O-bis[(3R)-3-hydroxyacyl]-alpha-D-glucosamine + holo-[ACP] + H(+). The protein operates within bacterial outer membrane biogenesis; LPS lipid A biosynthesis. Its function is as follows. Catalyzes the N-acylation of UDP-3-O-acylglucosamine using 3-hydroxyacyl-ACP as the acyl donor. Is involved in the biosynthesis of lipid A, a phosphorylated glycolipid that anchors the lipopolysaccharide to the outer membrane of the cell. The polypeptide is UDP-3-O-acylglucosamine N-acyltransferase (Rhizobium meliloti (strain 1021) (Ensifer meliloti)).